We begin with the raw amino-acid sequence, 179 residues long: Cell division protein ZapC (179 aa).

Belongs to the ZapC family. In terms of assembly, interacts directly with FtsZ.

The protein resides in the cytoplasm. Functionally, contributes to the efficiency of the cell division process by stabilizing the polymeric form of the cell division protein FtsZ. Acts by promoting interactions between FtsZ protofilaments and suppressing the GTPase activity of FtsZ. This is Cell division protein ZapC from Ferrimonas balearica (strain DSM 9799 / CCM 4581 / KCTC 23876 / PAT).